The chain runs to 426 residues: Tyrosine--tRNA ligase (426 aa).

Tyr-35 lines the L-tyrosine pocket. The short motif at 40–49 (PTADSLHIGH) is the 'HIGH' region element. Residues Tyr-172 and Gln-176 each contribute to the L-tyrosine site. The short motif at 232-236 (KLGKS) is the 'KMSKS' region element. Lys-235 provides a ligand contact to ATP. The S4 RNA-binding domain occupies 357-414 (ENIKDILVNSKLSKSKNNAKSVILSSSIRINNKKQKSIDFMFKKEDKLFNLFTLIKKG).

Belongs to the class-I aminoacyl-tRNA synthetase family. TyrS type 1 subfamily. In terms of assembly, homodimer.

It localises to the cytoplasm. It carries out the reaction tRNA(Tyr) + L-tyrosine + ATP = L-tyrosyl-tRNA(Tyr) + AMP + diphosphate + H(+). Catalyzes the attachment of tyrosine to tRNA(Tyr) in a two-step reaction: tyrosine is first activated by ATP to form Tyr-AMP and then transferred to the acceptor end of tRNA(Tyr). In Wigglesworthia glossinidia brevipalpis, this protein is Tyrosine--tRNA ligase.